The following is a 354-amino-acid chain: GTPase Obg (354 aa).

Residues 1-159 form the Obg domain; it reads MKYIDEAIIH…ADLKLELKVL (159 aa). In terms of domain architecture, OBG-type G spans 160–334; sequence ADVGLLGMPN…LTYAIMEFLE (175 aa). Residues 166-173, 191-195, 213-216, 284-287, and 315-317 contribute to the GTP site; these read GMPNAGKS, FTTMH, DIPG, NKVD, and SAM. Ser173 and Thr193 together coordinate Mg(2+).

Belongs to the TRAFAC class OBG-HflX-like GTPase superfamily. OBG GTPase family. As to quaternary structure, monomer. Mg(2+) serves as cofactor.

It localises to the cytoplasm. Its function is as follows. An essential GTPase which binds GTP, GDP and possibly (p)ppGpp with moderate affinity, with high nucleotide exchange rates and a fairly low GTP hydrolysis rate. Plays a role in control of the cell cycle, stress response, ribosome biogenesis and in those bacteria that undergo differentiation, in morphogenesis control. This is GTPase Obg from Nitrosospira multiformis (strain ATCC 25196 / NCIMB 11849 / C 71).